Here is a 504-residue protein sequence, read N- to C-terminus: Cytochrome P450 monooxygenase braC (504 aa).

A helical transmembrane segment spans residues 4-24; the sequence is LYLPTIWASTLTAATIFIVAV. Cys448 is a heme binding site.

It belongs to the cytochrome P450 family. Heme serves as cofactor.

The protein resides in the membrane. Its pathway is secondary metabolite biosynthesis. In terms of biological role, cytochrome P450 monooxygenase; part of the gene cluster that mediates the biosynthesis of the brasilane terpene glycosides brasilane D and E. The biosynthesis starts with the activity of the terpene cyclase braA that converts farnesyl pyrophosphate into the sesquiterpene alcohol trichobrasilenol. Subsequently, trichobrasilenol is glycosylated by the O-glycosyltransferase braB putatively using UDP-GlcNAc as sugar donor to yield brasilane A. The latter then undergoes two rounds of oxidation performed by the cytochrome P450 monooxygenase braC. In the first round braC hydroxylates C-12 forming brasilane D, which serves as substrate in the second round to establish the epoxide at the bond between C-5 and C-10 and oxidize the alcohol at C-12 to an aldehyde leading to the final product brasilane E. This Annulohypoxylon truncatum (Hypoxylon truncatum) protein is Cytochrome P450 monooxygenase braC.